The sequence spans 350 residues: Anthranilate phosphoribosyltransferase (350 aa).

5-phospho-alpha-D-ribose 1-diphosphate is bound by residues Gly82, 85-86, Ser90, 92-95, 110-118, and Gly122; these read GD, NVST, and KHGNRAVTG. An anthranilate-binding site is contributed by Gly82. Residue Ser94 participates in Mg(2+) binding. Asn113 is a binding site for anthranilate. Arg168 lines the anthranilate pocket. Mg(2+) is bound by residues Asp232 and Glu233.

This sequence belongs to the anthranilate phosphoribosyltransferase family. In terms of assembly, homodimer. The cofactor is Mg(2+).

The catalysed reaction is N-(5-phospho-beta-D-ribosyl)anthranilate + diphosphate = 5-phospho-alpha-D-ribose 1-diphosphate + anthranilate. It functions in the pathway amino-acid biosynthesis; L-tryptophan biosynthesis; L-tryptophan from chorismate: step 2/5. In terms of biological role, catalyzes the transfer of the phosphoribosyl group of 5-phosphorylribose-1-pyrophosphate (PRPP) to anthranilate to yield N-(5'-phosphoribosyl)-anthranilate (PRA). The sequence is that of Anthranilate phosphoribosyltransferase from Methanothermobacter marburgensis (strain ATCC BAA-927 / DSM 2133 / JCM 14651 / NBRC 100331 / OCM 82 / Marburg) (Methanobacterium thermoautotrophicum).